We begin with the raw amino-acid sequence, 292 residues long: RNA 5'-monophosphate methyltransferase (292 aa).

Residues 1 to 20 (MAVPTELHGGSVKETAAEKE) are disordered. Residues R46, N76, D110, 135–136 (DF), and M164 contribute to the S-adenosyl-L-methionine site. The Bin3-type SAM domain occupies 53–274 (ELLRQLFPES…KQTIETHPIP (222 aa)).

The protein belongs to the methyltransferase superfamily. Interacts with DICER1; the interaction may be mediated by RNA.

It localises to the cytoplasm. It carries out the reaction a 5'-end 5'-phospho-ribonucleoside-RNA + S-adenosyl-L-methionine = a 5'-end (5'-methylphospho)-ribonucleoside-RNA + S-adenosyl-L-homocysteine. The enzyme catalyses a 5'-end 5'-phospho-ribonucleoside-RNA + 2 S-adenosyl-L-methionine = a 5'-end (5'-bismethylphospho)-ribonucleoside-RNA + 2 S-adenosyl-L-homocysteine. In terms of biological role, O-methyltransferase that specifically monomethylates 5'-monophosphate of cytoplasmic histidyl tRNA (tRNA(His)), acting as a capping enzyme by protecting tRNA(His) from cleavage by DICER1. Also able, with less efficiently, to methylate the 5' monophosphate of a subset of pre-miRNAs, acting as a negative regulator of miRNA processing. The 5' monophosphate of pre-miRNAs is recognized by DICER1 and is required for pre-miRNAs processing: methylation at this position reduces the processing of pre-miRNAs by DICER1. Was also reported to mediate dimethylation of pre-miR-145; however dimethylation cannot be reproduced by another group which observes a monomethylation of pre-miR-145. This chain is RNA 5'-monophosphate methyltransferase (BCDIN3D), found in Pongo abelii (Sumatran orangutan).